Here is a 144-residue protein sequence, read N- to C-terminus: MAASKVKQDMPPPGGYGPIDYKRNLPRRGLSGYSMFAVGIGALIFGYWRMMRWNQERRRLLIEDLEARIALMPLFQAEKDRRTLQILRENLEEEAIIMKDVPNWKVGESVFHTTRWVPPLIGEMYGLRTKEEMSNANFGFTWYT.

Ala-2 bears the N-acetylalanine mark. A helical membrane pass occupies residues 30–51 (LSGYSMFAVGIGALIFGYWRMM).

Belongs to the complex I NDUFA13 subunit family. In terms of assembly, complex I is composed of 45 different subunits. Interacts with CARD15, but not with CARD4. Interacts with STAT3, but not with STAT1, STAT2 and STAT5A. Interacts with OLFM4.

The protein resides in the mitochondrion inner membrane. It localises to the nucleus. In terms of biological role, accessory subunit of the mitochondrial membrane respiratory chain NADH dehydrogenase (Complex I), that is believed not to be involved in catalysis. Complex I functions in the transfer of electrons from NADH to the respiratory chain. The immediate electron acceptor for the enzyme is believed to be ubiquinone. Involved in the interferon/all-trans-retinoic acid (IFN/RA) induced cell death. This apoptotic activity is inhibited by interaction with viral IRF1. Prevents the transactivation of STAT3 target genes. May play a role in CARD15-mediated innate mucosal responses and serve to regulate intestinal epithelial cell responses to microbes. The protein is NADH dehydrogenase [ubiquinone] 1 alpha subcomplex subunit 13 (Ndufa13) of Mus musculus (Mouse).